We begin with the raw amino-acid sequence, 141 residues long: Actin-depolymerizing factor 9 (141 aa).

S8 is subject to Phosphoserine. The 134-residue stretch at 8–141 folds into the ADF-H domain; sequence SGMWMTDDCK…GFDKIQDRAK (134 aa).

Belongs to the actin-binding proteins ADF family.

It is found in the cytoplasm. It localises to the cytoskeleton. Its function is as follows. Does not display typical F-actin depolymerizing activity. Exhibits a high ability to stabilize and cross-link actin filaments. Functions as an actin bundling protein with the highest efficiency under acidic conditions. May play a role in the modulation of levels of histone H3 lysine 4 trimethylation and H3 lysine 9 and 14 acetylation at the FLC locus. This chain is Actin-depolymerizing factor 9 (ADF9), found in Arabidopsis thaliana (Mouse-ear cress).